A 168-amino-acid chain; its full sequence is S-ribosylhomocysteine lyase (168 aa).

H54, H58, and C128 together coordinate Fe cation.

This sequence belongs to the LuxS family. Homodimer. Fe cation is required as a cofactor.

The enzyme catalyses S-(5-deoxy-D-ribos-5-yl)-L-homocysteine = (S)-4,5-dihydroxypentane-2,3-dione + L-homocysteine. Functionally, involved in the synthesis of autoinducer 2 (AI-2) which is secreted by bacteria and is used to communicate both the cell density and the metabolic potential of the environment. The regulation of gene expression in response to changes in cell density is called quorum sensing. Catalyzes the transformation of S-ribosylhomocysteine (RHC) to homocysteine (HC) and 4,5-dihydroxy-2,3-pentadione (DPD). The polypeptide is S-ribosylhomocysteine lyase (Histophilus somni (strain 129Pt) (Haemophilus somnus)).